The sequence spans 933 residues: MNGNLPHIQIQSPKNSLDHLNNGRQATHNFEHGKPGDREEANGHADAHSSSGRSRYLSSDTNLLRDGSSSLDPLSKHIMKRTRSEKTLSFLNPSRASSNTHLSREGTNRSSNVTRTVSGRKSNHGSSLTDTGESDQLSLKSFGAIRQPSQHRSSLFSRMLGSTSHIFGIREDMDNESSEEERDGIPRVEGNAADPFSWIPDGKNVWDSPPKYIRVLSHNKKEKSLDHLFLAQELYCKPTLAATHDRYYEPRATDFPNLAHESSEPSSSRHTADAQSITNASVHLHNSSSPLNRTPSVISDTLAVAITSNSSSNSSNNAIWAMKFSRDGRYLAVGGQDRILRIWAVLDSEHARSVASETCSSDPNNPKLNLKAPVFSEAPIREYAGHTADILDLSWSRNNFLLSSSMDKTARLWHPVRKDCLCCFEHSDFVTSIAFHPKDDRFFLSGSLDCKLRLWSIKEKAVSFWNELPELITAVAFSPDGGLAIAGTFVGLCLFYDTRGLRFRTQMSIRSSRGKNAKGSKVTGIQTRTQMIDNIAGDTEMLVTTNDSRIRIYNLRDKSLELKFKGHANAQSQNRAYFDDDGNYVICGSEDHQVFIWDLPPQHMHKTKKKKHEHFKASVRPITAAVFAPTKTKQLLTLSGDPVYLAAISARRSSVISNASIETGPSLRNLKSLSHSYLPIEIMKGHIIVCGDLDGRIRVFRQDSVFAARKLIEKKNIERKNSETLSNSSFFPQALKAHMNSISSPKRHFSLRHKKNASQITNNENNGNDDIKKGDEPEEEHVGLRKNSTQEKNANLDPNEALKRADMMMLQEGASSMVYYSLTNLDNPGATVNEAAKTAATIEQNEHEIQTSVDPISNVKAILPNADDVSSKNSSTEDQLECLRCGNSLFNVFSRSFVFEGAKFSIVCSHCNRKLLKSGSDDGSETHEMSTLP.

The span at 1-28 (MNGNLPHIQIQSPKNSLDHLNNGRQATH) shows a compositional bias: polar residues. 3 disordered regions span residues 1–135 (MNGN…GESD), 173–194 (MDNESSEEERDGIPRVEGNAAD), and 252–275 (ATDFPNLAHESSEPSSSRHTADAQ). A compositionally biased stretch (basic and acidic residues) spans 29-47 (NFEHGKPGDREEANGHADA). A compositionally biased stretch (low complexity) spans 49–59 (SSSGRSRYLSS). Composition is skewed to polar residues over residues 87–101 (TLSFLNPSRASSNTH) and 108–135 (NRSSNVTRTVSGRKSNHGSSLTDTGESD). Acidic residues predominate over residues 173-182 (MDNESSEEER). Residues 264–275 (EPSSSRHTADAQ) show a composition bias toward polar residues. WD repeat units follow at residues 314–353 (SSNNAIWAMKFSRDGRYLAVGGQDRILRIWAVLDSEHARS), 385–423 (GHTADILDLSWSRNNFLLSSSMDKTARLWHPVRKDCLCC), 425–465 (EHSD…VSFW), 467–506 (ELPELITAVAFSPDGGLAIAGTFVGLCLFYDTRGLRFRTQ), 517–563 (AKGS…LELK), 568–607 (ANAQSQNRAYFDDDGNYVICGSEDHQVFIWDLPPQHMHKT), 617–657 (ASVR…SVIS), and 665–710 (PSLR…AARK). Ser-722 carries the phosphoserine modification. Residues 756–796 (NASQITNNENNGNDDIKKGDEPEEEHVGLRKNSTQEKNANL) are disordered. Over residues 757-768 (ASQITNNENNGN) the composition is skewed to polar residues. Residues 769–783 (DDIKKGDEPEEEHVG) are compositionally biased toward basic and acidic residues.

The protein localises to the endoplasmic reticulum. It localises to the nucleus. This is an uncharacterized protein from Schizosaccharomyces pombe (strain 972 / ATCC 24843) (Fission yeast).